A 334-amino-acid polypeptide reads, in one-letter code: CRISPR-associated endonuclease Cas1 (334 aa).

Positions 161, 226, and 241 each coordinate Mn(2+).

This sequence belongs to the CRISPR-associated endonuclease Cas1 family. As to quaternary structure, homodimer, forms a heterotetramer with a Cas2 homodimer. Requires Mg(2+) as cofactor. It depends on Mn(2+) as a cofactor.

In terms of biological role, CRISPR (clustered regularly interspaced short palindromic repeat), is an adaptive immune system that provides protection against mobile genetic elements (viruses, transposable elements and conjugative plasmids). CRISPR clusters contain spacers, sequences complementary to antecedent mobile elements, and target invading nucleic acids. CRISPR clusters are transcribed and processed into CRISPR RNA (crRNA). Acts as a dsDNA endonuclease. Involved in the integration of spacer DNA into the CRISPR cassette. The sequence is that of CRISPR-associated endonuclease Cas1 from Methanothermobacter thermautotrophicus (strain ATCC 29096 / DSM 1053 / JCM 10044 / NBRC 100330 / Delta H) (Methanobacterium thermoautotrophicum).